Here is a 152-residue protein sequence, read N- to C-terminus: Xanthine-guanine phosphoribosyltransferase (152 aa).

5-phospho-alpha-D-ribose 1-diphosphate-binding positions include 37–38 (RG), Arg-69, and 88–96 (DDLVDTGGT). Arg-69 serves as a coordination point for GMP. Mg(2+) is bound at residue Asp-89. Guanine contacts are provided by Asp-92 and Ile-135. Asp-92 and Ile-135 together coordinate xanthine. Residues 92 to 96 (DTGGT) and 134 to 135 (WI) each bind GMP.

This sequence belongs to the purine/pyrimidine phosphoribosyltransferase family. XGPT subfamily. As to quaternary structure, homotetramer. The cofactor is Mg(2+).

It is found in the cell inner membrane. The enzyme catalyses GMP + diphosphate = guanine + 5-phospho-alpha-D-ribose 1-diphosphate. It carries out the reaction XMP + diphosphate = xanthine + 5-phospho-alpha-D-ribose 1-diphosphate. It catalyses the reaction IMP + diphosphate = hypoxanthine + 5-phospho-alpha-D-ribose 1-diphosphate. It functions in the pathway purine metabolism; GMP biosynthesis via salvage pathway; GMP from guanine: step 1/1. Its pathway is purine metabolism; XMP biosynthesis via salvage pathway; XMP from xanthine: step 1/1. Functionally, purine salvage pathway enzyme that catalyzes the transfer of the ribosyl-5-phosphate group from 5-phospho-alpha-D-ribose 1-diphosphate (PRPP) to the N9 position of the 6-oxopurines guanine and xanthine to form the corresponding ribonucleotides GMP (guanosine 5'-monophosphate) and XMP (xanthosine 5'-monophosphate), with the release of PPi. To a lesser extent, also acts on hypoxanthine. The protein is Xanthine-guanine phosphoribosyltransferase of Escherichia coli O7:K1 (strain IAI39 / ExPEC).